A 173-amino-acid chain; its full sequence is Coordinator of PRMT5 and differentiation stimulator (173 aa).

Methionine 1 carries the post-translational modification N-acetylmethionine. The interval 1-70 is disordered; sequence MDPQAATGRG…EGPSSEEEGF (70 aa). Serine 64 and serine 65 each carry phosphoserine.

In terms of assembly, interacts with PRMT5. Interacts with histone H4; specifically interacts with the N-terminus of histone H4 but not with histone H3. Interacts with CBFB. Found in a complex with PRMT5, RUNX1 and CBFB.

The protein localises to the nucleus. Histone-binding protein required for histone H4 methyltransferase activity of PRMT5. Specifically required for histone H4 'Arg-3' methylation mediated by PRMT5, but not histone H3 'Arg-8' methylation, suggesting that it modulates the substrate specificity of PRMT5. Specifically interacts with the N-terminus of histone H4 but not with histone H3, suggesting that it acts by promoting the association between histone H4 and PRMT5. Involved in CCNE1 promoter repression. Plays a role in muscle cell differentiation by modulating the recruitment of PRMT5 to the promoter of genes involved in the coordination between cell cycle exit and muscle differentiation. The polypeptide is Coordinator of PRMT5 and differentiation stimulator (Coprs) (Mus musculus (Mouse)).